Reading from the N-terminus, the 584-residue chain is Keratin, type I cytoskeletal 10 (584 aa).

The span at methionine 1–arginine 15 shows a compositional bias: low complexity. The interval methionine 1–glycine 24 is disordered. Residues methionine 1–asparagine 145 form a head region. Residues serine 14, serine 16, serine 42, serine 53, serine 56, and serine 170 each carry the phosphoserine modification. The tract at residues glutamate 146 to tryptophan 181 is coil 1A. Residues glutamate 146–glycine 460 form the IF rod domain. Residues tyrosine 182–threonine 202 form a linker 1 region. Positions isoleucine 203–leucine 294 are coil 1B. Residues arginine 295–leucine 317 form a linker 12 region. Residues leucine 318–glutamate 456 are coil 2. The interval leucine 453–tyrosine 584 is disordered. Positions glycine 457–serine 563 are enriched in gly residues. The interval glycine 457–tyrosine 584 is tail. The span at glycine 564 to tyrosine 584 shows a compositional bias: low complexity.

It belongs to the intermediate filament family. In terms of assembly, heterotetramer of two type I and two type II keratins. Heterodimer with KRT1. Two heterodimers of KRT1 and KRT10 form a heterotetramer. The KRT10 subunit in the heterotetramer is probably disulfide-linked. Interacts with PLEC isoform 1C, when in a heterodimer with KRT1. (Microbial infection) Interacts (via C-terminal tail domain) with the S.aureus clumping factor, clfB; this interaction probably mediates S.aureus attachment to the keratinized squamous epithelial cells from the nasal cavity. As to quaternary structure, (Microbial infection) Interacts (via the C-terminal tail domain) with S.pneumoniae serine-rich repeat protein PsrP; this interaction probably mediates S.pneumoniae adherence to lung tissue and subsequent pathogenesis. Neither protein has to be glycosylated for the interaction to occur. Seen in all suprabasal cell layers including stratum corneum. Expressed on the surface of lung cell lines. Localized on the surface of desquamated nasal epithelial cells (at protein level).

It is found in the secreted. It localises to the extracellular space. The protein localises to the cell surface. Its subcellular location is the cytoplasm. Its function is as follows. Plays a role in the establishment of the epidermal barrier on plantar skin. Involved in the maintenance of cell layer development and keratin filament bundles in suprabasal cells of the epithelium. Functionally, (Microbial infection) Acts as a mediator of S.aureus adherence to desquamated nasal epithelial cells via clfB, and hence may play a role in nasal colonization. (Microbial infection) Binds S.pneumoniae PsrP, mediating adherence of the bacteria to lung cell lines. Reduction of levels of KRT10 keratin decrease adherence, overexpression increases adherence. Neither protein has to be glycosylated for the interaction to occur. The polypeptide is Keratin, type I cytoskeletal 10 (KRT10) (Homo sapiens (Human)).